Here is a 260-residue protein sequence, read N- to C-terminus: Cytochrome c oxidase subunit 2 (260 aa).

The Mitochondrial intermembrane portion of the chain corresponds to 1–41 (MIVREWLFFTMAPCDAAEPWQLGFQDAATPMMQGIIDLHHD). Residues 42 to 58 (IFFFLILILVFVSWILV) traverse the membrane as a helical segment. The Mitochondrial matrix segment spans residues 59–82 (RALWHFHYKKNPIPQRIVHGTTIE). The helical transmembrane segment at 83-104 (IIRTIFPSIILMFIAIPSFALL) threads the bilayer. Residues 105-260 (YSMDEVVVDP…NQLIPQTGEA (156 aa)) lie on the Mitochondrial intermembrane side of the membrane. Residues H187, C222, E224, C226, H230, and M233 each contribute to the Cu cation site. E224 contributes to the Mg(2+) binding site.

Belongs to the cytochrome c oxidase subunit 2 family. In terms of assembly, component of the cytochrome c oxidase (complex IV, CIV), a multisubunit enzyme composed of a catalytic core of 3 subunits and several supernumerary subunits. The complex exists as a monomer or a dimer and forms supercomplexes (SCs) in the inner mitochondrial membrane with ubiquinol-cytochrome c oxidoreductase (cytochrome b-c1 complex, complex III, CIII). It depends on Cu cation as a cofactor.

The protein resides in the mitochondrion inner membrane. It carries out the reaction 4 Fe(II)-[cytochrome c] + O2 + 8 H(+)(in) = 4 Fe(III)-[cytochrome c] + 2 H2O + 4 H(+)(out). Component of the cytochrome c oxidase, the last enzyme in the mitochondrial electron transport chain which drives oxidative phosphorylation. The respiratory chain contains 3 multisubunit complexes succinate dehydrogenase (complex II, CII), ubiquinol-cytochrome c oxidoreductase (cytochrome b-c1 complex, complex III, CIII) and cytochrome c oxidase (complex IV, CIV), that cooperate to transfer electrons derived from NADH and succinate to molecular oxygen, creating an electrochemical gradient over the inner membrane that drives transmembrane transport and the ATP synthase. Cytochrome c oxidase is the component of the respiratory chain that catalyzes the reduction of oxygen to water. Electrons originating from reduced cytochrome c in the intermembrane space (IMS) are transferred via the dinuclear copper A center (CU(A)) of subunit 2 and heme A of subunit 1 to the active site in subunit 1, a binuclear center (BNC) formed by heme A3 and copper B (CU(B)). The BNC reduces molecular oxygen to 2 water molecules using 4 electrons from cytochrome c in the IMS and 4 protons from the mitochondrial matrix. The chain is Cytochrome c oxidase subunit 2 (COX2) from Beta vulgaris (Sugar beet).